Consider the following 333-residue polypeptide: Transcription factor MYB94 (333 aa).

HTH myb-type domains lie at 9-65 and 66-116; these read KIGV…RPGI and KRGN…KKKL. 2 consecutive DNA-binding regions (H-T-H motif) follow at residues 37-61 and 89-112; these read WRSVPTHTGLRRCSKSCRLRWTNYL and WAAIASYLPERTDNDIKNYWNTHL. Over residues 134–154 the composition is skewed to polar residues; that stretch reads KDFSISNKNTTSHQSSNSSKG. Disordered stretches follow at residues 134–157 and 183–218; these read KDFSISNKNTTSHQSSNSSKGQWE and PTNFSIPDLGYGPSSSSSSTTTTTTTTRNTNPYPSG. Over residues 196–209 the composition is skewed to low complexity; that stretch reads SSSSSSTTTTTTTT.

Expressed in germinating seeds, rosette and cauline leaves, flower buds, open flowers, stems and developing siliques.

The protein resides in the nucleus. Its function is as follows. Transcription activator involved in the activation of cuticular wax biosynthesis under drought stress. Binds directly to the promoters of genes involved in cuticular wax biosynthesis. Transactivates WSD1, KCS2/DAISY, CER1, CER2, FAR3 and ECR genes. Functions together with MYB96 in the activation of cuticular wax biosynthesis. The chain is Transcription factor MYB94 from Arabidopsis thaliana (Mouse-ear cress).